Reading from the N-terminus, the 415-residue chain is Proline-serine-threonine phosphatase-interacting protein 1 (415 aa).

An F-BAR domain is found at 5 to 264 (LQFRDAFWCR…TLEGCDVEGD (260 aa)). 2 coiled-coil regions span residues 94–133 (LALA…KLSL) and 162–215 (SANG…TCEA). Position 318 is a phosphoserine (S318). A Phosphotyrosine; by ABL1 modification is found at Y344. The region spanning 358–415 (SSAQDYRALYDYTAQNSDELDISAGDILAVILEGEDGWWTVERNGQRGFVPGSYLEKL) is the SH3 domain.

Homodimer. Homotrimer. Interacts (via coiled-coil domain) with CD2AP, PTPN12 and PTPN18. Interacts (via SH3 domain) with ABL1 and WAS. Interacts (via SH3 and coiled-coil domains) with MEFV (via B-box zinc finger); the interaction allows binding of MEFV to PYCARD and facilitates formation of PYCARD pyroptosomes. Interacts with DNM2 and FASLG. Interacts with CD2. In terms of processing, dephosphorylated on Tyr-344 by PTPN18, this event negatively regulates the association of PSTPIP1 with SH2 domain-containing proteins as tyrosine kinase. Phosphorylation of Tyr-344 is probably required for subsequent phosphorylation at other tyrosine residues. Phosphorylation is induced by activation of the EGFR and PDGFR in a ABL1 dependent manner. The phosphorylation regulates the interaction with WAS and with MEFV. Highly expressed in adult lung and spleen, and weakly expressed in testis, muscle, kidney, brain and heart. Highly expressed in spleen and thymus, moderately in lung, brain and muscle, and weakly expressed in heart and liver (at protein level).

It localises to the cytoplasm. It is found in the perinuclear region. The protein localises to the cell projection. Its subcellular location is the lamellipodium. The protein resides in the cleavage furrow. It localises to the cytoskeleton. It is found in the cell membrane. The protein localises to the uropodium. Functionally, involved in regulation of the actin cytoskeleton. May regulate WAS actin-bundling activity. Bridges the interaction between ABL1 and PTPN18 leading to ABL1 dephosphorylation. May play a role as a scaffold protein between PTPN12 and WAS and allow PTPN12 to dephosphorylate WAS. Has the potential to physically couple CD2 and CD2AP to WAS. Acts downstream of CD2 and CD2AP to recruit WAS to the T-cell:APC contact site so as to promote the actin polymerization required for synapse induction during T-cell activation. Down-regulates CD2-stimulated adhesion through the coupling of PTPN12 to CD2. Also has a role in innate immunity and the inflammatory response. Recruited to inflammasomes by MEFV. Induces formation of pyroptosomes, large supramolecular structures composed of oligomerized PYCARD dimers which form prior to inflammatory apoptosis. Binding to MEFV allows MEFV to bind to PYCARD and facilitates pyroptosome formation. Regulates endocytosis and cell migration in neutrophils. The protein is Proline-serine-threonine phosphatase-interacting protein 1 (Pstpip1) of Mus musculus (Mouse).